Consider the following 120-residue polypeptide: NADH dehydrogenase [ubiquinone] 1 subunit C2 (120 aa).

At Met-1 the chain carries N-acetylmethionine. The chain crosses the membrane as a helical span at residues 57 to 76; sequence GLHRQLLYITSFVFVGYYLL.

This sequence belongs to the complex I NDUFC2 subunit family. Complex I is composed of 45 different subunits. Interacts with TMEM242. In terms of processing, there is a minor unacetylated form of subunit B14.5b.

It is found in the mitochondrion inner membrane. Its function is as follows. Accessory subunit of the mitochondrial membrane respiratory chain NADH dehydrogenase (Complex I), that is believed not to be involved in catalysis but required for the complex assembly. Complex I functions in the transfer of electrons from NADH to the respiratory chain. The immediate electron acceptor for the enzyme is believed to be ubiquinone. This Bos taurus (Bovine) protein is NADH dehydrogenase [ubiquinone] 1 subunit C2.